The sequence spans 251 residues: Keratin-associated protein 10-10 (251 aa).

15 consecutive repeat copies span residues 26–30 (CCEPC), 31–35 (CCAPA), 52–56 (CCQTA), 84–88 (CCTSS), 94–98 (CCVPV), 99–103 (CCVPV), 104–109 (CCVPVC), 126–130 (CCQQS), 136–140 (CCTSS), 146–150 (CCVPV), 168–172 (CCQQS), 178–182 (CCTAS), 183–187 (CCRPS), 202–206 (CCVPV), and 220–224 (CCRTA). Residues 26-224 (CCEPCCCAPA…SCQPSCCRTA (199 aa)) form a 15 X 5 AA repeats of C-C-X(3) region.

This sequence belongs to the KRTAP type 10 family. In terms of assembly, interacts with hair keratins. In terms of tissue distribution, restricted to a narrow region of the hair fiber cuticle, lying approximately 20 cell layers above the apex of the dermal papilla of the hair root; not detected in any other tissues.

Its function is as follows. In the hair cortex, hair keratin intermediate filaments are embedded in an interfilamentous matrix, consisting of hair keratin-associated proteins (KRTAP), which are essential for the formation of a rigid and resistant hair shaft through their extensive disulfide bond cross-linking with abundant cysteine residues of hair keratins. The matrix proteins include the high-sulfur and high-glycine-tyrosine keratins. In Homo sapiens (Human), this protein is Keratin-associated protein 10-10 (KRTAP10-10).